The following is a 487-amino-acid chain: MYTMKKGKDMAKEEQETAAIEPLSPVSQLFVSPSLYCFIIFTLGFQTRCNPSTIVEGVKNTWIKLPRFSSKVEIKKNGKASWVPVSVRVEDHVVVPDLDYSNIENPDQFIEDYTSKLANTPMDMSRPLWELHLLNIKTSNAESLAIGKFHHSLGDGMSLISLLLASSRKTSDPDALPTTAATRKHASSNKKSWWLVGRFWFMIRIIFTTVVELFKYLLTLCFMRDTKTPLMGKTGDAIRSRKVIHRIVSFDDVKLVKNNMDMKVNDVLLGMTQAGLSRYLSRKYDEDMVVEKKKNLEKIRLRGTVFVNLRADTKLEDLANMMAKGSKCRWGNFVGVIIFPLWVRSEDDPLEYVRRAKSTMDIKKLSIESLICYGLIKLTRKILGGKVVETLVRRLFDHTTLTFSNVMGPDEDISFFDHPMSYVAASALGGPQALIIHYVTYVNKIVINLAVDTSVIRDPHLLCDDLVESLDIIKLAAMEKGVHKMEV.

Topologically, residues methionine 1–tryptophan 193 are cytoplasmic. Histidine 151 serves as the catalytic Proton acceptor. A helical membrane pass occupies residues tryptophan 194–phenylalanine 214. Topologically, residues lysine 215–valine 487 are lumenal.

The protein in the N-terminal section; belongs to the long-chain O-acyltransferase family. As to expression, mostly expressed in flowers and siliques.

It is found in the cell membrane. The protein resides in the endoplasmic reticulum membrane. The enzyme catalyses an acyl-CoA + a 1,2-diacyl-sn-glycerol = a triacyl-sn-glycerol + CoA. It carries out the reaction a long chain fatty alcohol + a fatty acyl-CoA = a wax ester + CoA. It functions in the pathway glycerolipid metabolism; triacylglycerol biosynthesis. It participates in lipid metabolism. Bifunctional wax ester synthase/diacylglycerol acyltransferase. Involved in cuticular wax biosynthesis. This is Wax ester synthase/diacylglycerol acyltransferase 3 from Arabidopsis thaliana (Mouse-ear cress).